Consider the following 843-residue polypeptide: Protein P (843 aa).

The segment at 1–177 (MPLSYQHFRK…FCGSPYSWEQ (177 aa)) is terminal protein domain (TP). The segment at 178–346 (DLQHGRLVFQ…YCLSHIVNLI (169 aa)) is spacer. The segment at 219-269 (RKSRLGPQPAQGQLAGRQQGGSGSIRARVHPSPWGTVGVEPSGSGPTHNCA) is disordered. Residues 223–235 (LGPQPAQGQLAGR) show a composition bias toward low complexity. A polymerase/reverse transcriptase domain (RT) region spans residues 347–690 (EDWGPCTEHG…YLNLYPVARQ (344 aa)). The Reverse transcriptase domain occupies 357-600 (EHRIRTPRTP…YSLNFMGYVI (244 aa)). 3 residues coordinate Mg(2+): aspartate 429, aspartate 551, and aspartate 552.

This sequence belongs to the hepadnaviridae P protein family.

It carries out the reaction DNA(n) + a 2'-deoxyribonucleoside 5'-triphosphate = DNA(n+1) + diphosphate. The enzyme catalyses Endonucleolytic cleavage to 5'-phosphomonoester.. Its activity is regulated as follows. Activated by host HSP70 and HSP40 in vitro to be able to bind the epsilon loop of the pgRNA. Because deletion of the RNase H region renders the protein partly chaperone-independent, the chaperones may be needed indirectly to relieve occlusion of the RNA-binding site by this domain. Inhibited by several reverse-transcriptase inhibitors: Lamivudine, Adefovir and Entecavir. In terms of biological role, multifunctional enzyme that converts the viral RNA genome into dsDNA in viral cytoplasmic capsids. This enzyme displays a DNA polymerase activity that can copy either DNA or RNA templates, and a ribonuclease H (RNase H) activity that cleaves the RNA strand of RNA-DNA heteroduplexes in a partially processive 3'- to 5'-endonucleasic mode. Neo-synthesized pregenomic RNA (pgRNA) are encapsidated together with the P protein, and reverse-transcribed inside the nucleocapsid. Initiation of reverse-transcription occurs first by binding the epsilon loop on the pgRNA genome, and is initiated by protein priming, thereby the 5'-end of (-)DNA is covalently linked to P protein. Partial (+)DNA is synthesized from the (-)DNA template and generates the relaxed circular DNA (RC-DNA) genome. After budding and infection, the RC-DNA migrates in the nucleus, and is converted into a plasmid-like covalently closed circular DNA (cccDNA). The activity of P protein does not seem to be necessary for cccDNA generation, and is presumably released from (+)DNA by host nuclear DNA repair machinery. This chain is Protein P, found in Hepatitis B virus genotype B2 subtype adw (isolate China/patient4/1996) (HBV-B).